We begin with the raw amino-acid sequence, 143 residues long: Large ribosomal subunit protein uL16 (143 aa).

The protein belongs to the universal ribosomal protein uL16 family. Part of the 50S ribosomal subunit.

In terms of biological role, binds 23S rRNA and is also seen to make contacts with the A and possibly P site tRNAs. The chain is Large ribosomal subunit protein uL16 from Caulobacter vibrioides (strain ATCC 19089 / CIP 103742 / CB 15) (Caulobacter crescentus).